Consider the following 479-residue polypeptide: Probable cytosol aminopeptidase (479 aa).

Residues K247 and D252 each contribute to the Mn(2+) site. K259 is an active-site residue. Mn(2+) is bound by residues D270, D329, and E331. Residue R333 is part of the active site.

This sequence belongs to the peptidase M17 family. It depends on Mn(2+) as a cofactor.

It is found in the cytoplasm. The enzyme catalyses Release of an N-terminal amino acid, Xaa-|-Yaa-, in which Xaa is preferably Leu, but may be other amino acids including Pro although not Arg or Lys, and Yaa may be Pro. Amino acid amides and methyl esters are also readily hydrolyzed, but rates on arylamides are exceedingly low.. It catalyses the reaction Release of an N-terminal amino acid, preferentially leucine, but not glutamic or aspartic acids.. Its function is as follows. Presumably involved in the processing and regular turnover of intracellular proteins. Catalyzes the removal of unsubstituted N-terminal amino acids from various peptides. The polypeptide is Probable cytosol aminopeptidase (Vesicomyosocius okutanii subsp. Calyptogena okutanii (strain HA)).